A 426-amino-acid polypeptide reads, in one-letter code: Mediator of RNA polymerase II transcription subunit 1 (426 aa).

A disordered region spans residues 319-349 (ISTSNSGSVQPKPRRKSSVLSNRRPSMTDSM). Residues 336–347 (SVLSNRRPSMTD) show a composition bias toward polar residues.

The protein belongs to the Mediator complex subunit 1 family. In terms of assembly, component of the Mediator complex.

The protein resides in the nucleus. Functionally, component of the Mediator complex, a coactivator involved in the regulated transcription of nearly all RNA polymerase II-dependent genes. Mediator functions as a bridge to convey information from gene-specific regulatory proteins to the basal RNA polymerase II transcription machinery. Mediator is recruited to promoters by direct interactions with regulatory proteins and serves as a scaffold for the assembly of a functional preinitiation complex with RNA polymerase II and the general transcription factors. This Kluyveromyces lactis (strain ATCC 8585 / CBS 2359 / DSM 70799 / NBRC 1267 / NRRL Y-1140 / WM37) (Yeast) protein is Mediator of RNA polymerase II transcription subunit 1 (MED1).